The sequence spans 316 residues: Acetaldehyde dehydrogenase (316 aa).

11–14 is an NAD(+) binding site; sequence SGNI. Cys131 (acyl-thioester intermediate) is an active-site residue. NAD(+)-binding positions include 162 to 170 and Asn289; that span reads SAGPGTRAN.

It belongs to the acetaldehyde dehydrogenase family. Interacts with MhpE.

The enzyme catalyses acetaldehyde + NAD(+) + CoA = acetyl-CoA + NADH + H(+). The protein operates within aromatic compound metabolism; 3-phenylpropanoate degradation. Functionally, catalyzes the conversion of acetaldehyde to acetyl-CoA, using NAD(+) and coenzyme A. Is the final enzyme in the meta-cleavage pathway for the degradation of aromatic compounds. This chain is Acetaldehyde dehydrogenase, found in Klebsiella pneumoniae (strain 342).